The following is a 362-amino-acid chain: tRNA-specific 2-thiouridylase MnmA 3 (362 aa).

ATP is bound by residues 11 to 18 (GMSGGIDS) and M37. The active-site Nucleophile is C91. A disulfide bridge connects residues C91 and C188. Residue G115 participates in ATP binding. The tract at residues 137 to 139 (KDQ) is interaction with tRNA. C188 (cysteine persulfide intermediate) is an active-site residue. Positions 296–297 (RY) are interaction with tRNA.

It belongs to the MnmA/TRMU family.

Its subcellular location is the cytoplasm. It carries out the reaction S-sulfanyl-L-cysteinyl-[protein] + uridine(34) in tRNA + AH2 + ATP = 2-thiouridine(34) in tRNA + L-cysteinyl-[protein] + A + AMP + diphosphate + H(+). In terms of biological role, catalyzes the 2-thiolation of uridine at the wobble position (U34) of tRNA, leading to the formation of s(2)U34. The polypeptide is tRNA-specific 2-thiouridylase MnmA 3 (Bacteroides fragilis (strain YCH46)).